Consider the following 226-residue polypeptide: Lipoprotein-releasing system ATP-binding protein LolD 1 (226 aa).

The region spanning 6–226 (LRLDKVTRSF…TLREGKVVAA (221 aa)) is the ABC transporter domain. Residue 42 to 49 (GPSGAGKS) participates in ATP binding.

The protein belongs to the ABC transporter superfamily. Lipoprotein translocase (TC 3.A.1.125) family. In terms of assembly, the complex is composed of two ATP-binding proteins (LolD) and two transmembrane proteins (LolC and LolE).

It is found in the cell inner membrane. Part of the ABC transporter complex LolCDE involved in the translocation of mature outer membrane-directed lipoproteins, from the inner membrane to the periplasmic chaperone, LolA. Responsible for the formation of the LolA-lipoprotein complex in an ATP-dependent manner. The chain is Lipoprotein-releasing system ATP-binding protein LolD 1 from Rhodospirillum rubrum (strain ATCC 11170 / ATH 1.1.1 / DSM 467 / LMG 4362 / NCIMB 8255 / S1).